Consider the following 348-residue polypeptide: Rhodopsin (348 aa).

The residue at position 1 (Met1) is an N-acetylmethionine. The Extracellular portion of the chain corresponds to 1 to 36 (MNGTEGPDFYIPMSNQTGVVRSPFEYPQYYLAEPWQ). N-linked (GlcNAc...) asparagine glycans are attached at residues Asn2 and Asn15. A helical transmembrane segment spans residues 37–61 (FSMLAAYMFLLIVLGFPINFLTLYV). Over 62 to 73 (TVQHKKLRTPLN) the chain is Cytoplasmic. Residues 74-96 (YILLNLAVADLFMVLGGFTTTLY) traverse the membrane as a helical segment. Residues 97–110 (TSLHGYFVFGPTGC) lie on the Extracellular side of the membrane. Cys110 and Cys187 are oxidised to a cystine. A helical membrane pass occupies residues 111–133 (NVEGFFATLGGEIALWSLVVLAI). Residues 134-136 (ERY) carry the 'Ionic lock' involved in activated form stabilization motif. The Cytoplasmic segment spans residues 134–152 (ERYVVVCKPMSNFRFGENH). The chain crosses the membrane as a helical span at residues 153 to 173 (AIMGVAFTWIMALACAAPPLV). Residues 174–202 (GWSRYIPEGMQCSCGIDYYTLKPEVNNES) lie on the Extracellular side of the membrane. Residue Glu201 participates in Zn(2+) binding. A helical transmembrane segment spans residues 203–224 (FVIYMFVVHFTIPLIIIFFCYG). Residues 225–252 (QLVFTVKEAAAQQQESATTQKAEKEVTR) lie on the Cytoplasmic side of the membrane. The chain crosses the membrane as a helical span at residues 253 to 274 (MVIIMVIAFLICWVPYASVAFY). Residues 275–286 (IFTHQGSNFGPI) lie on the Extracellular side of the membrane. Position 279 (Gln279) interacts with Zn(2+). A helical membrane pass occupies residues 287–308 (FMTIPAFFAKSSSIYNPVIYIM). Position 296 is an N6-(retinylidene)lysine (Lys296). Residues 309 to 348 (MNKQFRNCMLTTICCGKNPLGDDEASATASKTETSQVAPA) lie on the Cytoplasmic side of the membrane. S-palmitoyl cysteine attachment occurs at residues Cys322 and Cys323. An interaction with SAG region spans residues 330–348 (DDEASATASKTETSQVAPA). Ser334 bears the Phosphoserine mark. Phosphothreonine is present on Thr336. Ser338 is subject to Phosphoserine. Thr340 and Thr342 each carry phosphothreonine. Ser343 bears the Phosphoserine mark.

This sequence belongs to the G-protein coupled receptor 1 family. Opsin subfamily. As to quaternary structure, homodimer. May form a complex composed of RHO, GRK1 and RCVRN in a Ca(2+)-dependent manner; RCVRN prevents the interaction between GRK1 and RHO. Interacts with GRK1. Interacts (phosphorylated form) with SAG. Interacts with GNAT1. Interacts with GNAT3. SAG and G-proteins compete for a common binding site. Interacts with PRCD; the interaction promotes PRCD stability. Forms a complex with ASAP1 and ARF4. Forms a complex with ASAP1, RAB11A, Rabin8/RAB3IP, ARF4 and RAB11FIP3; the complex regulates Golgi-to-cilia rhodopsin/RHO transport in photoreceptors. In terms of processing, phosphorylated on some or all of the serine and threonine residues present in the C-terminal region. Contains one covalently linked retinal chromophore. Upon light absorption, the covalently bound 11-cis-retinal is converted to all-trans-retinal. After hydrolysis of the Schiff base and release of the covalently bound all-trans-retinal, active rhodopsin is regenerated by binding of a fresh molecule of 11-cis-retinal.

The protein resides in the membrane. It is found in the cell projection. It localises to the cilium. Its subcellular location is the photoreceptor outer segment. Functionally, photoreceptor required for image-forming vision at low light intensity. Required for photoreceptor cell viability after birth. Light-induced isomerization of 11-cis to all-trans retinal triggers a conformational change that activates signaling via G-proteins. Subsequent receptor phosphorylation mediates displacement of the bound G-protein alpha subunit by the arrestin SAG and terminates signaling. The chain is Rhodopsin (RHO) from Oryctolagus cuniculus (Rabbit).